The chain runs to 162 residues: 2-C-methyl-D-erythritol 2,4-cyclodiphosphate synthase (162 aa).

A divalent metal cation is bound by residues aspartate 12 and histidine 14. 4-CDP-2-C-methyl-D-erythritol 2-phosphate contacts are provided by residues 12–14 and 38–39; these read DVH and HS. Position 46 (histidine 46) interacts with a divalent metal cation. 4-CDP-2-C-methyl-D-erythritol 2-phosphate contacts are provided by residues 60–62, 136–139, phenylalanine 143, and arginine 146; these read DIG and TTTE.

The protein belongs to the IspF family. As to quaternary structure, homotrimer. A divalent metal cation serves as cofactor.

The enzyme catalyses 4-CDP-2-C-methyl-D-erythritol 2-phosphate = 2-C-methyl-D-erythritol 2,4-cyclic diphosphate + CMP. Its pathway is isoprenoid biosynthesis; isopentenyl diphosphate biosynthesis via DXP pathway; isopentenyl diphosphate from 1-deoxy-D-xylulose 5-phosphate: step 4/6. Its function is as follows. Involved in the biosynthesis of isopentenyl diphosphate (IPP) and dimethylallyl diphosphate (DMAPP), two major building blocks of isoprenoid compounds. Catalyzes the conversion of 4-diphosphocytidyl-2-C-methyl-D-erythritol 2-phosphate (CDP-ME2P) to 2-C-methyl-D-erythritol 2,4-cyclodiphosphate (ME-CPP) with a corresponding release of cytidine 5-monophosphate (CMP). This Porphyromonas gingivalis (strain ATCC BAA-308 / W83) protein is 2-C-methyl-D-erythritol 2,4-cyclodiphosphate synthase.